A 532-amino-acid polypeptide reads, in one-letter code: CTP synthase (532 aa).

The tract at residues 1-267 (MAKFIFVTGG…QDIIIEQLQL (267 aa)) is amidoligase domain. CTP is bound at residue Ser-13. Ser-13 contributes to the UTP binding site. 14 to 19 (GLGKGI) provides a ligand contact to ATP. Tyr-54 serves as a coordination point for L-glutamine. Position 71 (Asp-71) interacts with ATP. Asp-71 and Glu-141 together coordinate Mg(2+). Residues 148 to 150 (DIE), 188 to 193 (KTKPIQ), and Lys-224 each bind CTP. Residues 188 to 193 (KTKPIQ) and Lys-224 each bind UTP. The Glutamine amidotransferase type-1 domain maps to 292–532 (EISFVGKYIE…FIKAIVENNK (241 aa)). Gly-354 is an L-glutamine binding site. Catalysis depends on Cys-381, which acts as the Nucleophile; for glutamine hydrolysis. L-glutamine-binding positions include 382–385 (LGMQ), Glu-405, and Arg-461. Residues His-506 and Glu-508 contribute to the active site.

It belongs to the CTP synthase family. As to quaternary structure, homotetramer.

The enzyme catalyses UTP + L-glutamine + ATP + H2O = CTP + L-glutamate + ADP + phosphate + 2 H(+). The catalysed reaction is L-glutamine + H2O = L-glutamate + NH4(+). It catalyses the reaction UTP + NH4(+) + ATP = CTP + ADP + phosphate + 2 H(+). The protein operates within pyrimidine metabolism; CTP biosynthesis via de novo pathway; CTP from UDP: step 2/2. With respect to regulation, allosterically activated by GTP, when glutamine is the substrate; GTP has no effect on the reaction when ammonia is the substrate. The allosteric effector GTP functions by stabilizing the protein conformation that binds the tetrahedral intermediate(s) formed during glutamine hydrolysis. Inhibited by the product CTP, via allosteric rather than competitive inhibition. In terms of biological role, catalyzes the ATP-dependent amination of UTP to CTP with either L-glutamine or ammonia as the source of nitrogen. Regulates intracellular CTP levels through interactions with the four ribonucleotide triphosphates. In Mycoplasma mycoides subsp. mycoides SC (strain CCUG 32753 / NCTC 10114 / PG1), this protein is CTP synthase.